A 430-amino-acid chain; its full sequence is Serine--tRNA ligase (430 aa).

236–238 is a binding site for L-serine; it reads TAE. ATP is bound at residue 267-269; the sequence is RSE. Glutamate 290 contacts L-serine. An ATP-binding site is contributed by 354–357; sequence EISS. Serine 390 serves as a coordination point for L-serine.

The protein belongs to the class-II aminoacyl-tRNA synthetase family. Type-1 seryl-tRNA synthetase subfamily. As to quaternary structure, homodimer. The tRNA molecule binds across the dimer.

Its subcellular location is the cytoplasm. It carries out the reaction tRNA(Ser) + L-serine + ATP = L-seryl-tRNA(Ser) + AMP + diphosphate + H(+). The catalysed reaction is tRNA(Sec) + L-serine + ATP = L-seryl-tRNA(Sec) + AMP + diphosphate + H(+). It participates in aminoacyl-tRNA biosynthesis; selenocysteinyl-tRNA(Sec) biosynthesis; L-seryl-tRNA(Sec) from L-serine and tRNA(Sec): step 1/1. Functionally, catalyzes the attachment of serine to tRNA(Ser). Is also able to aminoacylate tRNA(Sec) with serine, to form the misacylated tRNA L-seryl-tRNA(Sec), which will be further converted into selenocysteinyl-tRNA(Sec). This Idiomarina loihiensis (strain ATCC BAA-735 / DSM 15497 / L2-TR) protein is Serine--tRNA ligase.